Here is a 359-residue protein sequence, read N- to C-terminus: Cytohesin-interacting protein (359 aa).

The PDZ domain occupies 77–166; the sequence is VVTVEKQDNG…LLTIETLNGT (90 aa). Residues 165–188 adopt a coiled-coil conformation; it reads GTMIHRRAELEAKLQTLKQTLKKK. The tract at residues 166–188 is interaction with CYTH1; the sequence is TMIHRRAELEAKLQTLKQTLKKK.

In terms of assembly, interacts with CYTH1 and SNX27.

The protein localises to the cytoplasm. The protein resides in the early endosome. By its binding to cytohesin-1 (CYTH1), it modifies activation of ARFs by CYTH1 and its precise function may be to sequester CYTH1 in the cytoplasm. The chain is Cytohesin-interacting protein (Cytip) from Mus musculus (Mouse).